We begin with the raw amino-acid sequence, 639 residues long: UvrABC system protein C (639 aa).

Residues 20–97 (ERSGVYRMFD…IKKFQPKFNI (78 aa)) enclose the GIY-YIG domain. Residues 207–242 (KELQENLSRKMEELSSQMRFEEAAEIRDRIKALSYV) form the UVR domain.

It belongs to the UvrC family. As to quaternary structure, interacts with UvrB in an incision complex.

The protein localises to the cytoplasm. In terms of biological role, the UvrABC repair system catalyzes the recognition and processing of DNA lesions. UvrC both incises the 5' and 3' sides of the lesion. The N-terminal half is responsible for the 3' incision and the C-terminal half is responsible for the 5' incision. In Rickettsia conorii (strain ATCC VR-613 / Malish 7), this protein is UvrABC system protein C.